Consider the following 341-residue polypeptide: Anthranilate phosphoribosyltransferase (341 aa).

5-phospho-alpha-D-ribose 1-diphosphate is bound by residues Gly84, Gly87 to Asp88, Thr92, Asn94 to Thr97, Lys112 to Ser120, and Ser124. An anthranilate-binding site is contributed by Gly84. Ser96 lines the Mg(2+) pocket. Asn115 contacts anthranilate. Arg170 lines the anthranilate pocket. Positions 229 and 230 each coordinate Mg(2+).

This sequence belongs to the anthranilate phosphoribosyltransferase family. Homodimer. It depends on Mg(2+) as a cofactor.

The catalysed reaction is N-(5-phospho-beta-D-ribosyl)anthranilate + diphosphate = 5-phospho-alpha-D-ribose 1-diphosphate + anthranilate. Its pathway is amino-acid biosynthesis; L-tryptophan biosynthesis; L-tryptophan from chorismate: step 2/5. In terms of biological role, catalyzes the transfer of the phosphoribosyl group of 5-phosphorylribose-1-pyrophosphate (PRPP) to anthranilate to yield N-(5'-phosphoribosyl)-anthranilate (PRA). This is Anthranilate phosphoribosyltransferase from Polynucleobacter necessarius subsp. necessarius (strain STIR1).